The sequence spans 747 residues: H(+)/Cl(-) exchange transporter 4 (747 aa).

Residues 1–50 form a required for localization in the endoplasmic reticulum region; it reads MDFLDEPFPDVGTYEDFHTIDWLREKSRDTDRHRKITSKSKESIWEFIKS. At 1-54 the chain is on the cytoplasmic side; sequence MDFLDEPFPDVGTYEDFHTIDWLREKSRDTDRHRKITSKSKESIWEFIKSLLDA. The next 2 helical transmembrane spans lie at 55–92 and 138–161; these read WSGWVVMLLIGLLAGTLAGVIDLAVDWMTDLKEGVCLS and LNYLMYILWALLFAFLAVSLVRVF. Positions 167-171 match the Selectivity filter part_1 motif; sequence GSGIP. S168 is a chloride binding site. The segment at residues 170 to 177 is an intramembrane region (helical); sequence IPEIKTIL. 2 helical membrane passes run 187 to 205 and 211 to 230; these read GKWTLLIKTVTLVLVVSSG and EGPLVHVACCCGNFFSSLFS. A Selectivity filter part_2 motif is present at residues 209 to 213; that stretch reads GKEGP. 2 intramembrane regions (helical) span residues 242-254 and 258-266; these read VLSAAAAAGVSVA and PIGGVLFSL. 5 helical membrane passes run 278-296, 320-345, 352-372, 429-449, and 454-473; these read LWRSFFAALVAAFTLRSIN, FPFILLGVFGGLWGTVFTRCNIAWCR, LGKYPVLEVIVVTAITAIIAY, MWQLALALIFKIVITIFTFGM, and GLFIPSMAVGAMAGRMVGIG. Positions 454-458 match the Selectivity filter part_3 motif; the sequence is GLFIP. Residue F456 coordinates chloride. 2 consecutive intramembrane regions (helical) follow at residues 501-515 and 519-530; these read GLYAMVGAAACLGGV and TVSLVVIMFELT. The segment at residues 531–534 is an intramembrane region (note=Loop between two helices); that stretch reads GGLE. A helical membrane pass occupies residues 535–553; sequence YIVPLMAAAVTSKWVADAF. Topologically, residues 554–747 are cytoplasmic; that stretch reads GKEGIYEAHI…NQDPESIIFN (194 aa). Y559 contacts chloride. The region spanning 587 to 653 is the CBS 1 domain; the sequence is MRPRRGEPPL…AIKNARQRQE (67 aa). ATP-binding positions include S597 and 618–620; that span reads YNG. The segment at 654-683 is required for localization in the endoplasmic reticulum; the sequence is GIVSNSIMYFTEEPPELPANSPHPLKLRRI. The region spanning 684-742 is the CBS 2 domain; the sequence is LNLSPFTVTDHTPMETVVDIFRKLGLRQCLVTRSGRLLGIITKKDVLRHMAQMANQDPE. Residue 725 to 728 participates in ATP binding; sequence TKKD.

This sequence belongs to the chloride channel (TC 2.A.49) family. ClC-4/CLCN4 subfamily. Strongly expressed in liver and brain, but also in heart, muscle, kidney and spleen.

Its subcellular location is the early endosome membrane. The protein resides in the late endosome membrane. It is found in the endoplasmic reticulum membrane. The protein localises to the lysosome membrane. It localises to the recycling endosome membrane. Strongly outwardly rectifying, electrogenic H(+)/Cl(-)exchanger which mediates the exchange of chloride ions against protons. The CLC channel family contains both chloride channels and proton-coupled anion transporters that exchange chloride or another anion for protons. The presence of conserved gating glutamate residues is typical for family members that function as antiporters. The protein is H(+)/Cl(-) exchange transporter 4 (Clcn4) of Rattus norvegicus (Rat).